The primary structure comprises 199 residues: NAD(P)H dehydrogenase (quinone) (199 aa).

The region spanning 4 to 190 is the Flavodoxin-like domain; sequence ILVLYYSMYG…TIARYQGEHV (187 aa). Residues 10-15 and 79-81 each bind FMN; these read SMYGHI and TRF. An NAD(+)-binding site is contributed by Tyr-12. Residue Trp-99 participates in substrate binding. Residues 114–119 and His-134 each bind FMN; that span reads STGTGG.

Belongs to the WrbA family. FMN serves as cofactor.

It carries out the reaction a quinone + NADH + H(+) = a quinol + NAD(+). It catalyses the reaction a quinone + NADPH + H(+) = a quinol + NADP(+). The protein is NAD(P)H dehydrogenase (quinone) of Serratia proteamaculans (strain 568).